We begin with the raw amino-acid sequence, 268 residues long: NH(3)-dependent NAD(+) synthetase (268 aa).

Residue 46–53 participates in ATP binding; it reads GVSGGQDS. Aspartate 52 serves as a coordination point for Mg(2+). Arginine 140 lines the deamido-NAD(+) pocket. Threonine 160 contacts ATP. Residue glutamate 165 coordinates Mg(2+). Deamido-NAD(+) contacts are provided by lysine 173 and aspartate 180. ATP is bound at residue lysine 189. 260-261 provides a ligand contact to deamido-NAD(+); that stretch reads HK.

It belongs to the NAD synthetase family. In terms of assembly, homodimer.

The enzyme catalyses deamido-NAD(+) + NH4(+) + ATP = AMP + diphosphate + NAD(+) + H(+). It participates in cofactor biosynthesis; NAD(+) biosynthesis; NAD(+) from deamido-NAD(+) (ammonia route): step 1/1. In terms of biological role, catalyzes the ATP-dependent amidation of deamido-NAD to form NAD. Uses ammonia as a nitrogen source. The polypeptide is NH(3)-dependent NAD(+) synthetase (Buchnera aphidicola subsp. Acyrthosiphon pisum (strain APS) (Acyrthosiphon pisum symbiotic bacterium)).